The primary structure comprises 322 residues: CPX chromosomal region candidate gene 1 protein homolog (322 aa).

2 stretches are compositionally biased toward polar residues: residues 1-23 (MTSS…NETP) and 37-78 (TNIS…TQND). Positions 1-83 (MTSSNQGNDP…MTQNDPPDEE (83 aa)) are disordered.

This is CPX chromosomal region candidate gene 1 protein homolog (Cpxcr1) from Mus musculus (Mouse).